The chain runs to 88 residues: Small ribosomal subunit protein uS17 (88 aa).

The protein belongs to the universal ribosomal protein uS17 family. Part of the 30S ribosomal subunit.

Its function is as follows. One of the primary rRNA binding proteins, it binds specifically to the 5'-end of 16S ribosomal RNA. The polypeptide is Small ribosomal subunit protein uS17 (Xylella fastidiosa (strain M23)).